A 721-amino-acid polypeptide reads, in one-letter code: MEGQNKSITFDGREIRLTTGLYAPQANGSVMIECGDTSLLVTATKTTKKEVSDFLPLICDYEEKLYAAGRIPGGFMRREGRPPERATLISRLIDRPMRPLFPSWMRDEIQIVASCLSLDERVPADILAVTGASIATLLGEIPFYGPMAAVRVGLIGDDFILNPSYREIEKGDLDIVVAGSKEGIVMIEAGANQLSEQDTIEAIDFGYEAVSELIKSQEDLLKDLGIKQVKPSEPEEDKTLPSFLEKNCTKPIELVLKKFDLSKEERDLELEKIKVETQGKIESLKDDNQLKVLLSENDKLLSSDFKKLTKKLMRSQIINDGKRVDGRDLDEVRKISASAGILPKRVHGSALFQRGLTQVLSTTTLGTPSDAQEMDDLNPSTEKTYLHHYNFPPYSVGETRPMRTPGRREIGHGALAERAIIPVLPGKETFPYVLRVVSEVLSSNGSTSMGSVCGSTLSLLDAGVPLKAPVSGTAMGLIKEGKEVRILTDIQGIEDFLGDMDFKVAGTDKGITALQMDMKITGLPVSIISDAIKKARPARLHILEKMQEAIEKPQETLSPHAPRLLSFRIDPELIGTVIGPGGRTIKGITERTNTKIDIEDGGIVTIASHDGAAAEEAQKIIEGLTRKVHEGEIFPGVVTRIIPIGAFVEILPGKEGMVHISQLSEARVERVEDVVRQGDEVTVRVREIDSRGRINLTLRGVGQNGGMSYPEPTPTPVAPLS.

Mg(2+) contacts are provided by D495 and D501. The 60-residue stretch at 562–621 (PRLLSFRIDPELIGTVIGPGGRTIKGITERTNTKIDIEDGGIVTIASHDGAAAEEAQKII) folds into the KH domain. Positions 631–699 (GEIFPGVVTR…SRGRINLTLR (69 aa)) constitute an S1 motif domain. The interval 702-721 (GQNGGMSYPEPTPTPVAPLS) is disordered. Residues 711–721 (EPTPTPVAPLS) show a composition bias toward pro residues.

Belongs to the polyribonucleotide nucleotidyltransferase family. It depends on Mg(2+) as a cofactor.

It localises to the cytoplasm. The enzyme catalyses RNA(n+1) + phosphate = RNA(n) + a ribonucleoside 5'-diphosphate. Involved in mRNA degradation. Catalyzes the phosphorolysis of single-stranded polyribonucleotides processively in the 3'- to 5'-direction. In Prochlorococcus marinus (strain MIT 9301), this protein is Polyribonucleotide nucleotidyltransferase.